A 197-amino-acid chain; its full sequence is Imidazoleglycerol-phosphate dehydratase (197 aa).

The protein belongs to the imidazoleglycerol-phosphate dehydratase family.

The protein resides in the cytoplasm. The catalysed reaction is D-erythro-1-(imidazol-4-yl)glycerol 3-phosphate = 3-(imidazol-4-yl)-2-oxopropyl phosphate + H2O. It functions in the pathway amino-acid biosynthesis; L-histidine biosynthesis; L-histidine from 5-phospho-alpha-D-ribose 1-diphosphate: step 6/9. This is Imidazoleglycerol-phosphate dehydratase from Pseudomonas fluorescens (strain SBW25).